The chain runs to 242 residues: MGEASPPAPARRHLLVLLLLLSTLVIPSAAAPIHDADAQESSLGLTGLQSLLQGFSRLFLKGNLLRGIDSLFSAPMDFRGLPGNYHKEENQEHQLGNNTLSSHLQIDKMTDNKTGEVLISENVVASIQPAEGSFEGDLKVPRMEEKEALVPIQKATDSFHTELHPRVAFWIIKLPRRRSHQDALEGGHWLSEKRHRLQAIRDGLRKGTHKDVLEEGTESSSHSRLSPRKTHLLYILRPSRQL.

The first 30 residues, 1-30, serve as a signal peptide directing secretion; that stretch reads MGEASPPAPARRHLLVLLLLLSTLVIPSAA. N-linked (GlcNAc...) asparagine glycosylation is found at Asn-97 and Asn-112.

In terms of assembly, interacts with SLXL1; Co-localize in seminiferous tubules. Interacts with SLY. N-glycosylated during spermatogenesis. Not N-glycosylated in mature sperm. As to expression, more highly expressed in adult testis than in fetal testis. Exclusively expressed in the testis (at protein level). Intense expression in stages II, III and IV of spermatogenesis, whereas expression is lower in stage I.

It localises to the secreted. Its subcellular location is the cytoplasmic vesicle. It is found in the secretory vesicle. The protein resides in the acrosome. Functionally, involved in fertilization by facilitating sperm penetration of the zona pellucida. May promote spermatocyte apoptosis, thereby limiting sperm production. In adults, may reduce testosterone synthesis in Leydig cells. Is not essential either for development or fertility. The protein is Dickkopf-like protein 1 of Homo sapiens (Human).